A 418-amino-acid chain; its full sequence is Putative competence-damage inducible protein (418 aa).

The protein belongs to the CinA family.

This chain is Putative competence-damage inducible protein, found in Streptococcus pneumoniae (strain JJA).